Reading from the N-terminus, the 282-residue chain is MENGFLLINKEQGKTSFETLFPIKKYFNTNHVGHAGTLDKFASGILIALVGKYTKLAGYFISLDKEYVAEFRFGLETDTLDSNGRIVNKADYIPSVEDIDLKLKDFVGEIYQSPPRFSSIHIDGIRAYKLALNGKFFEIKKRRVNVYDIQRLSYDFSSSSLSLKITCSKGTYIRSIARDLAYSLNSCAYVSNLKRTKIGMFRLKDSTLCKNLSKSSLISLESLSSFKKVYIDSSKVNLVKNGAYVEVQININEFKILKSREGEILAVIEGIGFNKYKYVIIF.

D39 (nucleophile) is an active-site residue.

It belongs to the pseudouridine synthase TruB family. Type 1 subfamily.

The catalysed reaction is uridine(55) in tRNA = pseudouridine(55) in tRNA. Functionally, responsible for synthesis of pseudouridine from uracil-55 in the psi GC loop of transfer RNAs. The sequence is that of tRNA pseudouridine synthase B from Borrelia garinii subsp. bavariensis (strain ATCC BAA-2496 / DSM 23469 / PBi) (Borreliella bavariensis).